Reading from the N-terminus, the 310-residue chain is Porphobilinogen deaminase (310 aa).

Cys242 carries the S-(dipyrrolylmethanemethyl)cysteine modification.

The protein belongs to the HMBS family. As to quaternary structure, monomer. Requires dipyrromethane as cofactor.

It catalyses the reaction 4 porphobilinogen + H2O = hydroxymethylbilane + 4 NH4(+). Its pathway is porphyrin-containing compound metabolism; protoporphyrin-IX biosynthesis; coproporphyrinogen-III from 5-aminolevulinate: step 2/4. In terms of biological role, tetrapolymerization of the monopyrrole PBG into the hydroxymethylbilane pre-uroporphyrinogen in several discrete steps. This Shewanella pealeana (strain ATCC 700345 / ANG-SQ1) protein is Porphobilinogen deaminase.